Here is a 257-residue protein sequence, read N- to C-terminus: uncharacterized protein (257 aa).

This sequence to yeast YKR015c.

This is an uncharacterized protein from Saccharomyces cerevisiae (strain ATCC 204508 / S288c) (Baker's yeast).